Here is a 79-residue protein sequence, read N- to C-terminus: D-alanyl carrier protein (79 aa).

In terms of domain architecture, Carrier spans 1-77 (MDTKQGVLDI…KIVAKVESLE (77 aa)). Position 35 is an O-(pantetheine 4'-phosphoryl)serine (Ser35).

Belongs to the DltC family. 4'-phosphopantetheine is transferred from CoA to a specific serine of apo-DCP.

The protein localises to the cytoplasm. Its pathway is cell wall biogenesis; lipoteichoic acid biosynthesis. Its function is as follows. Carrier protein involved in the D-alanylation of lipoteichoic acid (LTA). The loading of thioester-linked D-alanine onto DltC is catalyzed by D-alanine--D-alanyl carrier protein ligase DltA. The DltC-carried D-alanyl group is further transferred to cell membrane phosphatidylglycerol (PG) by forming an ester bond, probably catalyzed by DltD. D-alanylation of LTA plays an important role in modulating the properties of the cell wall in Gram-positive bacteria, influencing the net charge of the cell wall. The protein is D-alanyl carrier protein of Lactobacillus helveticus (strain DPC 4571).